We begin with the raw amino-acid sequence, 506 residues long: Glutamate--tRNA ligase (506 aa).

Residues 29–39 (PSPTGTPHVGL) carry the 'HIGH' region motif. The 'KMSKS' region motif lies at 273 to 277 (KLSKR). Lys-276 is a binding site for ATP.

Belongs to the class-I aminoacyl-tRNA synthetase family. Glutamate--tRNA ligase type 1 subfamily. In terms of assembly, monomer.

It is found in the cytoplasm. The enzyme catalyses tRNA(Glu) + L-glutamate + ATP = L-glutamyl-tRNA(Glu) + AMP + diphosphate. Catalyzes the attachment of glutamate to tRNA(Glu) in a two-step reaction: glutamate is first activated by ATP to form Glu-AMP and then transferred to the acceptor end of tRNA(Glu). This chain is Glutamate--tRNA ligase, found in Paenarthrobacter aurescens (strain TC1).